The following is a 591-amino-acid chain: Metalloendopeptidase OPG085 (591 aa).

Zn(2+) is bound at residue His41. The active site involves Glu44. 2 residues coordinate Zn(2+): His45 and Glu112.

Belongs to the peptidase M44 family. Zn(2+) is required as a cofactor. Post-translationally, undergoes proteolytic processing during the course of infection. May be cleaved into 46 kDa and 22 kDa products (Potential).

Its subcellular location is the virion. Probably involved in maturation of some viral proteins by processing them preferentially at Ala-Gly-|-Ser/Thr/Lys motifs. Does not seem to be responsible for the cleavage of major core proteins. The protein is Metalloendopeptidase OPG085 (OPG085) of Homo sapiens (Human).